A 432-amino-acid polypeptide reads, in one-letter code: Ribosome biogenesis protein WDR12 homolog (432 aa).

The segment at 13–97 (LQIRLVALNK…ESVIEVVYFQ (85 aa)) is ubiquitin-like (UBL) domain. WD repeat units lie at residues 109–146 (LHSD…YAIF), 148–190 (GHES…KSVE), 197–236 (GHTQ…KDDD), 265–303 (GHTD…NKSD), 305–345 (NVNK…DQTV), 352–392 (SHKN…APLY), and 396–432 (GHED…AQRS).

It belongs to the WD repeat WDR12/YTM1 family.

The protein localises to the nucleus. Its subcellular location is the nucleolus. The protein resides in the nucleoplasm. Required for maturation of ribosomal RNAs and formation of the large ribosomal subunit. This chain is Ribosome biogenesis protein WDR12 homolog, found in Trichoplax adhaerens (Trichoplax reptans).